Reading from the N-terminus, the 720-residue chain is MSREDFSDTLRVLVATDCHLGYMEKDEIRRHDSFKAFEEICSIAEEKQVDFLLLGGDLFHENKPSRTTLVKAIEILRRHCLNDKPVQFQVVSDQTVNFQNAFGQVNYEDPHFNVGLPVFSIHGNHDDPAGVDNLSAIDILSACNLVNYFGKMVLGGSGVGQITLYPILMKKGSTTVALYGLGNIRDERLNRMFQTPHAVQWMRPEVQEGCDVSDWFNILVLHQNRVKSNPKNAISEHFLPRFLDFIVWGHEHECLIDPQEVSGMGFHITQPGSSVATSLIDGESKPKHVLLLEIKGNQYRPTKIPLTSVRPFEYTEIVLKDESDIDPNDQNSILEHLDKVVRNLIEKASKKAVNRSEIKLPLVRIKVDYSGFMTINPQRFGQKYVGKVANPQDILIFSKASKKGRSEANIDDSERLRPEELNQQNIEALVAESNLKMEILPVNDLDVALHNFVNKDDKLAFYSCVQYNLQETRGKLAKDSDAKKFEEDDLILKVGECLEERLKDRSTRPTGSSQFLSTGLTSENLTKGSSGIANASFSDDEDTTQMSGLAPPTRGRRGSSTANTTRGRAKAPTRGRGRGKASSAMKQTTLDSSLGFRQSQRSASAAASAAFKSASTIGEDDVDSPSSEEVEPEDFNKPDSSSEDDESTKGKGRKRPATTKRGRGRGSGTSKRGRKNESSSSLNRLLSSKDDDEDEDDEDREKKLNKSQPRVTRNYGALRR.

Mn(2+)-binding residues include D17, H19, D57, and N124. Residue H125 is the Proton donor of the active site. Residues H250 and H252 each coordinate Mn(2+). The tract at residues 503–720 is disordered; it reads KDRSTRPTGS…VTRNYGALRR (218 aa). Positions 508 to 537 are enriched in polar residues; sequence RPTGSSQFLSTGLTSENLTKGSSGIANASF. A compositionally biased stretch (basic residues) spans 567 to 579; the sequence is GRAKAPTRGRGRG. Over residues 596-615 the composition is skewed to low complexity; the sequence is FRQSQRSASAAASAAFKSAS. Positions 618–633 are enriched in acidic residues; sequence GEDDVDSPSSEEVEPE. Residues 650 to 664 show a composition bias toward basic residues; the sequence is GKGRKRPATTKRGRG. Positions 690–699 are enriched in acidic residues; sequence DDDEDEDDED.

Belongs to the MRE11/RAD32 family. Component of the MRN complex composed of two heterodimers RAD50/MRE11 associated with a single NBS1. Requires Mn(2+) as cofactor.

The protein resides in the nucleus. It is found in the chromosome. Functionally, core component of the MRN complex, which plays a central role in double-strand break (DSB) repair, DNA recombination, maintenance of telomere integrity and meiosis. The MRN complex is involved in the repair of DNA double-strand breaks (DSBs) via homologous recombination (HR), an error-free mechanism which primarily occurs during S and G2 phases. The complex (1) mediates the end resection of damaged DNA, which generates proper single-stranded DNA, a key initial steps in HR, and is (2) required for the recruitment of other repair factors and efficient activation of ATM and ATR upon DNA damage. Within the MRN complex, MRE11 possesses both single-strand endonuclease activity and double-strand-specific 3'-5' exonuclease activity. MRE11 first endonucleolytically cleaves the 5' strand at DNA DSB ends to prevent non-homologous end joining (NHEJ) and licence HR. It then generates a single-stranded DNA gap via 3' to 5' exonucleolytic degradation, which is required for single-strand invasion and recombination. In Arabidopsis thaliana (Mouse-ear cress), this protein is Double-strand break repair protein MRE11 (MRE11).